The sequence spans 357 residues: DNA integrity scanning protein DisA (357 aa).

Residues 8–148 form the DAC domain; it reads PQELIEKIKL…NYKYVVNQVD (141 aa). 3',3'-c-di-AMP-binding residues include Gly76, Leu94, Thr107, Thr111, and Arg128.

This sequence belongs to the DisA family. In terms of assembly, homooctamer. The cofactor is Mg(2+).

It catalyses the reaction 2 ATP = 3',3'-c-di-AMP + 2 diphosphate. Its activity is regulated as follows. Inhibited by 3'-dATP. Participates in a DNA-damage check-point. DisA forms globular foci that rapidly scan along the chromosomes searching for lesions. Functionally, has diadenylate cyclase activity, catalyzing the condensation of 2 ATP molecules into cyclic di-AMP (c-di-AMP). c-di-AMP likely acts as a signaling molecule that may couple DNA integrity with a cellular process. This rate-limiting step is the accessibility of the active site; mutating the possible exit tunnel (residues 128-130) increases product 2-fold despite Arg-130 being important for ATP-binding. Does not convert GTP to c-di-GMP. This is DNA integrity scanning protein DisA from Thermotoga maritima (strain ATCC 43589 / DSM 3109 / JCM 10099 / NBRC 100826 / MSB8).